Reading from the N-terminus, the 418-residue chain is Gamma-glutamyl phosphate reductase (418 aa).

The protein belongs to the gamma-glutamyl phosphate reductase family.

It localises to the cytoplasm. It catalyses the reaction L-glutamate 5-semialdehyde + phosphate + NADP(+) = L-glutamyl 5-phosphate + NADPH + H(+). It participates in amino-acid biosynthesis; L-proline biosynthesis; L-glutamate 5-semialdehyde from L-glutamate: step 2/2. Its function is as follows. Catalyzes the NADPH-dependent reduction of L-glutamate 5-phosphate into L-glutamate 5-semialdehyde and phosphate. The product spontaneously undergoes cyclization to form 1-pyrroline-5-carboxylate. This is Gamma-glutamyl phosphate reductase from Trichlorobacter lovleyi (strain ATCC BAA-1151 / DSM 17278 / SZ) (Geobacter lovleyi).